Here is a 178-residue protein sequence, read N- to C-terminus: Large ribosomal subunit protein bL17 (178 aa).

Low complexity-rich tracts occupy residues 123–139 (KAPA…NTAT) and 151–160 (EDAAAQAPVA). The tract at residues 123–178 (KAPASAADAKAQINTATEAKEAEPEAPAEDAAAQAPVADEQKAAEVDEKAEEKPEA) is disordered. Basic and acidic residues predominate over residues 161-178 (DEQKAAEVDEKAEEKPEA).

Belongs to the bacterial ribosomal protein bL17 family. Part of the 50S ribosomal subunit. Contacts protein L32.

The chain is Large ribosomal subunit protein bL17 from Cutibacterium acnes (strain DSM 16379 / KPA171202) (Propionibacterium acnes).